Reading from the N-terminus, the 367-residue chain is D-alanine--D-alanine ligase (367 aa).

The region spanning 148–357 (KMAFEQAGLP…FPELVDKLVQ (210 aa)) is the ATP-grasp domain. An ATP-binding site is contributed by 184 to 239 (EASLGYPCFVKPANLGSSVGISKVRSRQELEDALDNAANYDRRIIVEAGVVAREVE). Asp-310, Glu-324, and Asn-326 together coordinate Mg(2+).

Belongs to the D-alanine--D-alanine ligase family. Requires Mg(2+) as cofactor. Mn(2+) is required as a cofactor.

Its subcellular location is the cytoplasm. The catalysed reaction is 2 D-alanine + ATP = D-alanyl-D-alanine + ADP + phosphate + H(+). It functions in the pathway cell wall biogenesis; peptidoglycan biosynthesis. Its function is as follows. Cell wall formation. The polypeptide is D-alanine--D-alanine ligase (Trichormus variabilis (strain ATCC 29413 / PCC 7937) (Anabaena variabilis)).